The following is a 725-amino-acid chain: Polyribonucleotide nucleotidyltransferase (725 aa).

Residues aspartate 488 and aspartate 494 each coordinate Mg(2+). A KH domain is found at 555 to 614; it reads PRMITMKIHPDKIREVIGKGGSTIQALTKETGTTIDIQEDGTITIASTSTDGMAEAKRRI. Positions 624-692 constitute an S1 motif domain; the sequence is GKIYAGTVLK…EKGRLRLSLK (69 aa). The disordered stretch occupies residues 702 to 725; it reads ISPIAQGDAPAAAPAAPASPDQQQ. The span at 706-725 shows a compositional bias: low complexity; sequence AQGDAPAAAPAAPASPDQQQ.

The protein belongs to the polyribonucleotide nucleotidyltransferase family. Mg(2+) is required as a cofactor.

Its subcellular location is the cytoplasm. The catalysed reaction is RNA(n+1) + phosphate = RNA(n) + a ribonucleoside 5'-diphosphate. Involved in mRNA degradation. Catalyzes the phosphorolysis of single-stranded polyribonucleotides processively in the 3'- to 5'-direction. The polypeptide is Polyribonucleotide nucleotidyltransferase (Cupriavidus metallidurans (strain ATCC 43123 / DSM 2839 / NBRC 102507 / CH34) (Ralstonia metallidurans)).